A 263-amino-acid chain; its full sequence is Triosephosphate isomerase (263 aa).

A substrate-binding site is contributed by 10–12 (NWK). Catalysis depends on His-104, which acts as the Electrophile. The active-site Proton acceptor is Glu-176. Substrate-binding positions include Gly-182, Ser-221, and 242 to 243 (GG).

This sequence belongs to the triosephosphate isomerase family. Homodimer.

It localises to the cytoplasm. The enzyme catalyses D-glyceraldehyde 3-phosphate = dihydroxyacetone phosphate. Its pathway is carbohydrate biosynthesis; gluconeogenesis. The protein operates within carbohydrate degradation; glycolysis; D-glyceraldehyde 3-phosphate from glycerone phosphate: step 1/1. Involved in the gluconeogenesis. Catalyzes stereospecifically the conversion of dihydroxyacetone phosphate (DHAP) to D-glyceraldehyde-3-phosphate (G3P). In Haemophilus influenzae (strain PittEE), this protein is Triosephosphate isomerase.